Consider the following 143-residue polypeptide: HTH-type transcriptional regulator BudR (143 aa).

An HTH lysR-type domain is found at 1 to 58 (MELRYLRYFVAVARERHFTRAAKALGISQPPLSQQIKRLEEEVGTPLFRRLTRGVELT). A DNA-binding region (H-T-H motif) is located at residues 18-37 (FTRAAKALGISQPPLSQQIK).

It belongs to the LysR transcriptional regulatory family.

Its function is as follows. Regulator of the budABC operon for 2,3-butanediol synthesis. This chain is HTH-type transcriptional regulator BudR (budR), found in Klebsiella aerogenes (Enterobacter aerogenes).